We begin with the raw amino-acid sequence, 278 residues long: MSGMSRSLFGLGLRKPHYGDFLDGDAPVAVDFVEVISENFMVPGGRPRDVLRRVRERHPVALHGVSMSVGSADGIDRDYLARLRLLADEVDPLFVSDHLCWTRIEGFNAHDLLPLPYTEEALDVVCANIAIAQDVLGRAMLIENPSSYVAFDAPMTEWEFLDAMCARTGCGLLLDVNNIYVSASNHGFDAQAYLAGIPADRVAQIHLAGHSQGRTLLIDTHDRPVPPPVWALYEAAIAKLGPVATMIERDDDIPPLAELIDELQVARDMANAHMRRAA.

The protein belongs to the UPF0276 family.

The polypeptide is UPF0276 protein Swit_4400 (Rhizorhabdus wittichii (strain DSM 6014 / CCUG 31198 / JCM 15750 / NBRC 105917 / EY 4224 / RW1) (Sphingomonas wittichii)).